The chain runs to 449 residues: UDP-N-acetylmuramoylalanine--D-glutamate ligase (449 aa).

Residue Gly-118–Thr-124 participates in ATP binding.

The protein belongs to the MurCDEF family.

It localises to the cytoplasm. It catalyses the reaction UDP-N-acetyl-alpha-D-muramoyl-L-alanine + D-glutamate + ATP = UDP-N-acetyl-alpha-D-muramoyl-L-alanyl-D-glutamate + ADP + phosphate + H(+). The protein operates within cell wall biogenesis; peptidoglycan biosynthesis. Its function is as follows. Cell wall formation. Catalyzes the addition of glutamate to the nucleotide precursor UDP-N-acetylmuramoyl-L-alanine (UMA). This chain is UDP-N-acetylmuramoylalanine--D-glutamate ligase, found in Leuconostoc citreum (strain KM20).